The chain runs to 102 residues: MNKIRKGDEVIVITGKDKGKRGVVLAVGAEHVTVEGINLVKKHVKPNPMKGTTGGVEAKTMPLHISNVALVDANGKASRVGIKVEDGKKVRFLKTTGAVLSA.

This sequence belongs to the universal ribosomal protein uL24 family. Part of the 50S ribosomal subunit.

In terms of biological role, one of two assembly initiator proteins, it binds directly to the 5'-end of the 23S rRNA, where it nucleates assembly of the 50S subunit. One of the proteins that surrounds the polypeptide exit tunnel on the outside of the subunit. This Burkholderia mallei (strain NCTC 10229) protein is Large ribosomal subunit protein uL24.